The chain runs to 345 residues: Phosphoribosylformylglycinamidine cyclo-ligase (345 aa).

It belongs to the AIR synthase family.

It localises to the cytoplasm. The catalysed reaction is 2-formamido-N(1)-(5-O-phospho-beta-D-ribosyl)acetamidine + ATP = 5-amino-1-(5-phospho-beta-D-ribosyl)imidazole + ADP + phosphate + H(+). The protein operates within purine metabolism; IMP biosynthesis via de novo pathway; 5-amino-1-(5-phospho-D-ribosyl)imidazole from N(2)-formyl-N(1)-(5-phospho-D-ribosyl)glycinamide: step 2/2. In Shewanella amazonensis (strain ATCC BAA-1098 / SB2B), this protein is Phosphoribosylformylglycinamidine cyclo-ligase.